The following is a 426-amino-acid chain: Putative competence-damage inducible protein (426 aa).

The protein belongs to the CinA family.

This chain is Putative competence-damage inducible protein, found in Symbiobacterium thermophilum (strain DSM 24528 / JCM 14929 / IAM 14863 / T).